We begin with the raw amino-acid sequence, 141 residues long: MAKKVEKLVKLQIPAGKATPAPPVGPALGQAGINIMGFTKEFNARTADQAGMIIPVVISVYEDKSFTFVTKTPPAAVLLKKAAGVEKGSGTPNKTKVATVTRAQVQQIAETKMPDLNAANIESAMRMIEGTARSMGFTVTD.

Belongs to the universal ribosomal protein uL11 family. As to quaternary structure, part of the ribosomal stalk of the 50S ribosomal subunit. Interacts with L10 and the large rRNA to form the base of the stalk. L10 forms an elongated spine to which L12 dimers bind in a sequential fashion forming a multimeric L10(L12)X complex. In terms of processing, one or more lysine residues are methylated.

Forms part of the ribosomal stalk which helps the ribosome interact with GTP-bound translation factors. The polypeptide is Large ribosomal subunit protein uL11 (Streptococcus gordonii (strain Challis / ATCC 35105 / BCRC 15272 / CH1 / DL1 / V288)).